The sequence spans 164 residues: I-Kappa-B like protein F1 (164 aa).

ANK repeat units follow at residues 57–89 (HGRQ…NINA), 94–124 (TGNT…DLGA), and 128–157 (QQET…AYNN).

It belongs to the polydnaviridae I-Kappa-B-like protein family.

Suppresses the host immune response through NF-kappa-B inactivation. Possesses ankyrin repeat domains required for NF-kappa-B binding but lacks the regulatory regions required for dissociation from NF-kappa-B and degradation. Therefore, prevents host NF-kappa-B release and subsequent activation. This is I-Kappa-B like protein F1 (F2) from Microplitis demolitor bracovirus (isolate Webb) (MdBV).